Here is a 100-residue protein sequence, read N- to C-terminus: Urease subunit gamma (100 aa).

It belongs to the urease gamma subunit family. In terms of assembly, heterotrimer of UreA (gamma), UreB (beta) and UreC (alpha) subunits. Three heterotrimers associate to form the active enzyme.

Its subcellular location is the cytoplasm. It catalyses the reaction urea + 2 H2O + H(+) = hydrogencarbonate + 2 NH4(+). It participates in nitrogen metabolism; urea degradation; CO(2) and NH(3) from urea (urease route): step 1/1. This chain is Urease subunit gamma, found in Mycolicibacterium smegmatis (strain ATCC 700084 / mc(2)155) (Mycobacterium smegmatis).